Consider the following 219-residue polypeptide: MAFLLHQARFFTTVNHLRDLPPTVQPEVAFAGRSNAGKSTAINVLCNQKRLAFASKTPGRTQHINYFSVGPAAEPVAHLVDLPGYGYAEVPGAAKAHWEQLLSSYLQTRPQLCGMILMMDARRPLTELDRRMIEWFAPTGKPIHSLLTKCDKLTRQESINALRATQKSLDAYRDAGYAGKLTVQLFSALKRTGLDDAHALIESWVRPAAADEDRAAVAE.

Residues 24–207 (VQPEVAFAGR…HALIESWVRP (184 aa)) enclose the EngB-type G domain. GTP is bound by residues 32–39 (GRSNAGKS), 59–63 (GRTQH), 81–84 (DLPG), 148–151 (TKCD), and 185–188 (LFSA). Residues Ser-39 and Thr-61 each coordinate Mg(2+).

It belongs to the TRAFAC class TrmE-Era-EngA-EngB-Septin-like GTPase superfamily. EngB GTPase family. The cofactor is Mg(2+).

Its function is as follows. Necessary for normal cell division and for the maintenance of normal septation. The chain is Probable GTP-binding protein EngB from Burkholderia mallei (strain ATCC 23344).